Consider the following 233-residue polypeptide: Orotidine 5'-phosphate decarboxylase (233 aa).

Residues Asp10, Lys32, 60–69, Thr115, Arg176, Gln185, Gly205, and Arg206 each bind substrate; that span reads DLKLHDIPAT. Lys62 serves as the catalytic Proton donor.

It belongs to the OMP decarboxylase family. Type 1 subfamily. In terms of assembly, homodimer.

The catalysed reaction is orotidine 5'-phosphate + H(+) = UMP + CO2. It functions in the pathway pyrimidine metabolism; UMP biosynthesis via de novo pathway; UMP from orotate: step 2/2. Functionally, catalyzes the decarboxylation of orotidine 5'-monophosphate (OMP) to uridine 5'-monophosphate (UMP). The chain is Orotidine 5'-phosphate decarboxylase from Thermobifida fusca (strain YX).